The chain runs to 119 residues: Large ribosomal subunit protein uL22c (119 aa).

The protein belongs to the universal ribosomal protein uL22 family. Part of the 50S ribosomal subunit.

It localises to the plastid. Its subcellular location is the chloroplast. In terms of biological role, this protein binds specifically to 23S rRNA. The globular domain of the protein is located near the polypeptide exit tunnel on the outside of the subunit, while an extended beta-hairpin is found that lines the wall of the exit tunnel in the center of the 70S ribosome. This is Large ribosomal subunit protein uL22c (rpl22) from Anthoceros angustus (Hornwort).